A 454-amino-acid polypeptide reads, in one-letter code: Chromosomal replication initiator protein DnaA (454 aa).

The tract at residues 1 to 71 (MTKEQWGQLQ…HEVRQEDPAV (71 aa)) is domain I, interacts with DnaA modulators. The domain II stretch occupies residues 71–112 (VRRLRFAVPSHVNATTKPARPAQATAPRAPAEKTPRSTLSTA). The tract at residues 82–108 (VNATTKPARPAQATAPRAPAEKTPRST) is disordered. Positions 84 to 99 (ATTKPARPAQATAPRA) are enriched in low complexity. Positions 113 to 334 (PLDARFTFDN…GALTRLCAFA (222 aa)) are domain III, AAA+ region. 4 residues coordinate ATP: Gly157, Gly159, Lys160, and Thr161. The tract at residues 335 to 454 (SLVGREIDME…LELLRRALEE (120 aa)) is domain IV, binds dsDNA.

Belongs to the DnaA family. Oligomerizes as a right-handed, spiral filament on DNA at oriC.

It localises to the cytoplasm. Functionally, plays an essential role in the initiation and regulation of chromosomal replication. ATP-DnaA binds to the origin of replication (oriC) to initiate formation of the DNA replication initiation complex once per cell cycle. Binds the DnaA box (a 9 base pair repeat at the origin) and separates the double-stranded (ds)DNA. Forms a right-handed helical filament on oriC DNA; dsDNA binds to the exterior of the filament while single-stranded (ss)DNA is stabiized in the filament's interior. The ATP-DnaA-oriC complex binds and stabilizes one strand of the AT-rich DNA unwinding element (DUE), permitting loading of DNA polymerase. After initiation quickly degrades to an ADP-DnaA complex that is not apt for DNA replication. Binds acidic phospholipids. This chain is Chromosomal replication initiator protein DnaA, found in Roseobacter denitrificans (strain ATCC 33942 / OCh 114) (Erythrobacter sp. (strain OCh 114)).